A 708-amino-acid polypeptide reads, in one-letter code: MIGWTHVCVSALILRKYGPEVLEEILRKAGYQEDIKFDIQCYYDDTETMRIFRVAATVLGLSVDDMWEMYGEFLITHACETGWQKMLFCMANNLQEFLDNLNSMHYFIDQIAFKSEMKGPTFQCEPFGESGLKLHYFSFRQGLFPIVKGLVRKTARTLFEMDVKVCMLERNQERRKSGMVEHVIFSVEPDDNHRKGKRLFHKFRNTKTTENAPSFTLSSTILVGLRDFKNIFPYHVCFNKQMIIEHIGIYLLREYGLENKKTLKVSDLMQLVQPSDIQLTYKNVLSYLNTLFIFQLKHHSKRNEVQEGSSEAFQQPLVLKGEMMPINDGNSIIFICSPHVTTVRDILNLKLYISDMPMHDATRDLVMLNQSRICQMELNKKLEETMKKMKKMTEELEVKKSQTDRLLFEFVPPVIAEALRAAKTVPAQEFSDCSVIFTDIPDFFTISVNCSPTEIITVVTDLFHRFDRIIEKHKGYKVLSLMDSYLIVGGVPNANQYHCEDSLNLALGLLFEAKQVVVPKLERSVRLRIGVHCGPVVAGIVSQQKPRFCVLGNTVNVTKSICSHSSPGKVLVSNAVRTMVTKHLKSIFVFNANGYLELQSGKVLTHFLEKNEKCSVWDIVDRDKATNDSIDGYRELHSDNGTEEWQEATVAAYRVISVVDALENKQSRTRKALTRLRSVKRKFRTIQSNDSGVSVSEPNVESAVCSIM.

Histidine 105 is a heme binding site. Residues 368–409 (LNQSRICQMELNKKLEETMKKMKKMTEELEVKKSQTDRLLFE) adopt a coiled-coil conformation. The Guanylate cyclase domain occupies 434 to 562 (SVIFTDIPDF…NTVNVTKSIC (129 aa)). Residues aspartate 439 and aspartate 483 each coordinate Mg(2+).

This sequence belongs to the adenylyl cyclase class-4/guanylyl cyclase family. In terms of assembly, heterodimer; with other soluble guanylate cyclases. The cofactor is heme. Expressed in a small number of neurons, corresponding to URX, AQR and PQR neurons.

Its subcellular location is the cytoplasm. The catalysed reaction is GTP = 3',5'-cyclic GMP + diphosphate. Its activity is regulated as follows. May be regulated by molecular oxygen. Probably not activated by nitric oxide (NO). Its function is as follows. Synthesizes cyclic GMP (cGMP) from GTP. May play a role in sensory neurons. This chain is Soluble guanylate cyclase gcy-37 (gcy-37), found in Caenorhabditis elegans.